We begin with the raw amino-acid sequence, 428 residues long: Phosphoribosylamine--glycine ligase (428 aa).

The ATP-grasp domain maps to 109-316 (KDFLHRHGIP…LVELCLAALD (208 aa)). 135–196 (LRQVGAPVVV…EEFLTGEEAS (62 aa)) is an ATP binding site. The tract at residues 211–235 (SSQDHKARDDGDRGPNTGGMGAYSP) is disordered. Residues 213–223 (QDHKARDDGDR) are compositionally biased toward basic and acidic residues. E286 and N288 together coordinate Mg(2+).

Belongs to the GARS family. The cofactor is Mg(2+). Requires Mn(2+) as cofactor.

The catalysed reaction is 5-phospho-beta-D-ribosylamine + glycine + ATP = N(1)-(5-phospho-beta-D-ribosyl)glycinamide + ADP + phosphate + H(+). It functions in the pathway purine metabolism; IMP biosynthesis via de novo pathway; N(1)-(5-phospho-D-ribosyl)glycinamide from 5-phospho-alpha-D-ribose 1-diphosphate: step 2/2. The protein is Phosphoribosylamine--glycine ligase (purD) of Allochromatium vinosum (strain ATCC 17899 / DSM 180 / NBRC 103801 / NCIMB 10441 / D) (Chromatium vinosum).